Reading from the N-terminus, the 58-residue chain is Large ribosomal subunit protein uL30 (58 aa).

This sequence belongs to the universal ribosomal protein uL30 family. In terms of assembly, part of the 50S ribosomal subunit.

The chain is Large ribosomal subunit protein uL30 from Blochmanniella floridana.